A 237-amino-acid polypeptide reads, in one-letter code: UPF0053 protein HI_0056 (237 aa).

The next 7 helical transmembrane spans lie at 12–32, 49–69, 90–110, 126–146, 151–171, 188–208, and 210–230; these read ISLV…IIFI, ILGL…LAWI, ILLI…KEAI, YLGV…DSVI, MASH…VMMF, ILAL…SLDI, and IPKG…MINI.

The protein belongs to the UPF0053 family.

The protein localises to the cell membrane. The protein is UPF0053 protein HI_0056 of Haemophilus influenzae (strain ATCC 51907 / DSM 11121 / KW20 / Rd).